We begin with the raw amino-acid sequence, 288 residues long: Quinate/shikimate dehydrogenase (288 aa).

Positions 71 and 107 each coordinate substrate. NAD(+) contacts are provided by residues 132 to 135 (AGGA), 155 to 158 (NRRD), Lys-205, 232 to 235 (CVYN), and Gly-255.

Belongs to the shikimate dehydrogenase family. Homodimer.

The enzyme catalyses L-quinate + NAD(+) = 3-dehydroquinate + NADH + H(+). It carries out the reaction L-quinate + NADP(+) = 3-dehydroquinate + NADPH + H(+). It catalyses the reaction shikimate + NADP(+) = 3-dehydroshikimate + NADPH + H(+). The catalysed reaction is shikimate + NAD(+) = 3-dehydroshikimate + NADH + H(+). Its pathway is metabolic intermediate biosynthesis; chorismate biosynthesis; chorismate from D-erythrose 4-phosphate and phosphoenolpyruvate: step 4/7. In terms of biological role, the actual biological function of YdiB remains unclear, nor is it known whether 3-dehydroshikimate or quinate represents the natural substrate. Catalyzes the reversible NAD-dependent reduction of both 3-dehydroshikimate (DHSA) and 3-dehydroquinate to yield shikimate (SA) and quinate, respectively. It can use both NAD or NADP for catalysis, however it has higher catalytic efficiency with NAD. The sequence is that of Quinate/shikimate dehydrogenase from Escherichia coli O81 (strain ED1a).